Consider the following 785-residue polypeptide: Conidiophore development regulator abaA (785 aa).

Residues 1–22 form a disordered region; it reads MAEWQTECMLPPTQPGFEGVGP. Positions 130-204 form a DNA-binding region, TEA; it reads GKDGEPVWSD…QVLDSFLKGD (75 aa). Positions 213 to 232 are disordered; the sequence is EQPADRSNGQPPSAGPRWRN.

This sequence belongs to the TEC1 family.

It localises to the nucleus. Functionally, brlA, abaA and wetA are pivotal regulators of conidiophore development and conidium maturation. They act individually and together to regulate their own expression and that of numerous other sporulation-specific genes. Binds to the sequence 5'-CATTCY-3', where Y is a pyrimidine, making both major- and minor-groove contacts. Controls expression of wetA. This Aspergillus oryzae (strain ATCC 42149 / RIB 40) (Yellow koji mold) protein is Conidiophore development regulator abaA.